Consider the following 120-residue polypeptide: UPF0344 protein LMHCC_0278 (120 aa).

4 helical membrane passes run 3–23, 33–53, 62–82, and 92–112; these read GYIHLISWVAIVVLTVTALLI, MLQMINRVFYILVILSGIMMV, ILAIFKILMGIIVIGVVEMLL, and GMFLMIFVIVVVITISLGFYL.

It belongs to the UPF0344 family.

Its subcellular location is the cell membrane. This chain is UPF0344 protein LMHCC_0278, found in Listeria monocytogenes serotype 4a (strain HCC23).